A 460-amino-acid polypeptide reads, in one-letter code: L-seryl-tRNA(Sec) selenium transferase (460 aa).

Residue lysine 293 is modified to N6-(pyridoxal phosphate)lysine.

Belongs to the SelA family. Pyridoxal 5'-phosphate is required as a cofactor.

It localises to the cytoplasm. It catalyses the reaction L-seryl-tRNA(Sec) + selenophosphate + H(+) = L-selenocysteinyl-tRNA(Sec) + phosphate. Its pathway is aminoacyl-tRNA biosynthesis; selenocysteinyl-tRNA(Sec) biosynthesis; selenocysteinyl-tRNA(Sec) from L-seryl-tRNA(Sec) (bacterial route): step 1/1. Functionally, converts seryl-tRNA(Sec) to selenocysteinyl-tRNA(Sec) required for selenoprotein biosynthesis. The sequence is that of L-seryl-tRNA(Sec) selenium transferase from Haemophilus ducreyi (strain 35000HP / ATCC 700724).